Reading from the N-terminus, the 234-residue chain is Adenosine 5'-phosphosulfate reductase (234 aa).

Residues cysteine 120, cysteine 121, cysteine 203, and cysteine 206 each contribute to the [4Fe-4S] cluster site. Catalysis depends on cysteine 229, which acts as the Nucleophile; cysteine thiosulfonate intermediate.

It belongs to the PAPS reductase family. CysH subfamily. The cofactor is [4Fe-4S] cluster.

The protein localises to the cytoplasm. The catalysed reaction is [thioredoxin]-disulfide + sulfite + AMP + 2 H(+) = adenosine 5'-phosphosulfate + [thioredoxin]-dithiol. The protein operates within sulfur metabolism; hydrogen sulfide biosynthesis; sulfite from sulfate. Functionally, catalyzes the formation of sulfite from adenosine 5'-phosphosulfate (APS) using thioredoxin as an electron donor. This Bacillus cereus (strain Q1) protein is Adenosine 5'-phosphosulfate reductase.